A 405-amino-acid polypeptide reads, in one-letter code: MAKLTVSDLELSGKKVLMRVDFNVPIKAGVIGNDNRIVAALPTIKYVLENNGRAILFSHLGRIKSEDDKKELSLAPVAARLGELLGKNVKFVPHTRGEELESAINALQDGEVLMVENTRFEDVVDGVEVKNESKNNPELGKYWAGLGDDLFINDAFGTAHRAHASNVGIASNVSQVAAGFLMEKEIKFLGDAVANPVRPFVAIIGGAKVSDKIEIVKSLLAKADKVIVGGGMAYTFDAAKGEKIGNSLFEADKVELAKELMAEAGDKLVLPVDSIAADAFSNDAKTEVVDATAGIPDGYMGLDIGPKSVKLLQDTLADAKTVVWNGPMGVFEMPNFAKGTLAIGEELVKVTENGGTTIVGGGDSTAAVQQLGVADKLSHISTGGGASLEYLEGKELPGIASISEK.

Residues D21–N23, R36, H59–R62, R119, and R161 contribute to the substrate site. ATP contacts are provided by residues K212, G301, E332, and G361–S364.

This sequence belongs to the phosphoglycerate kinase family. As to quaternary structure, monomer.

The protein localises to the cytoplasm. It catalyses the reaction (2R)-3-phosphoglycerate + ATP = (2R)-3-phospho-glyceroyl phosphate + ADP. It functions in the pathway carbohydrate degradation; glycolysis; pyruvate from D-glyceraldehyde 3-phosphate: step 2/5. This Leuconostoc citreum (strain KM20) protein is Phosphoglycerate kinase.